The sequence spans 140 residues: Translation initiation factor 2 subunit beta (140 aa).

It belongs to the eIF-2-beta/eIF-5 family. Heterotrimer composed of an alpha, a beta and a gamma chain.

Functionally, eIF-2 functions in the early steps of protein synthesis by forming a ternary complex with GTP and initiator tRNA. The protein is Translation initiation factor 2 subunit beta (eif2b) of Pyrococcus horikoshii (strain ATCC 700860 / DSM 12428 / JCM 9974 / NBRC 100139 / OT-3).